A 285-amino-acid polypeptide reads, in one-letter code: Ribose-phosphate pyrophosphokinase (285 aa).

ATP is bound by residues 34 to 36 and 91 to 92; these read DGE and RQ. His-124 and Asp-162 together coordinate Mg(2+). Lys-185 is an active-site residue. Residues Arg-187, Asp-211, and 215-219 each bind D-ribose 5-phosphate; that span reads STGGT.

The protein belongs to the ribose-phosphate pyrophosphokinase family. Class III (archaeal) subfamily. It depends on Mg(2+) as a cofactor.

The protein localises to the cytoplasm. The enzyme catalyses D-ribose 5-phosphate + ATP = 5-phospho-alpha-D-ribose 1-diphosphate + AMP + H(+). It participates in metabolic intermediate biosynthesis; 5-phospho-alpha-D-ribose 1-diphosphate biosynthesis; 5-phospho-alpha-D-ribose 1-diphosphate from D-ribose 5-phosphate (route I): step 1/1. Its function is as follows. Involved in the biosynthesis of the central metabolite phospho-alpha-D-ribosyl-1-pyrophosphate (PRPP) via the transfer of pyrophosphoryl group from ATP to 1-hydroxyl of ribose-5-phosphate (Rib-5-P). The polypeptide is Ribose-phosphate pyrophosphokinase (Pyrococcus abyssi (strain GE5 / Orsay)).